The chain runs to 466 residues: Asparagine--tRNA ligase (466 aa).

The protein belongs to the class-II aminoacyl-tRNA synthetase family. In terms of assembly, homodimer.

Its subcellular location is the cytoplasm. It carries out the reaction tRNA(Asn) + L-asparagine + ATP = L-asparaginyl-tRNA(Asn) + AMP + diphosphate + H(+). The chain is Asparagine--tRNA ligase from Shewanella amazonensis (strain ATCC BAA-1098 / SB2B).